An 88-amino-acid polypeptide reads, in one-letter code: Putative regulatory protein Ava_1474 (88 aa).

Belongs to the RemA family.

This is Putative regulatory protein Ava_1474 from Trichormus variabilis (strain ATCC 29413 / PCC 7937) (Anabaena variabilis).